The following is a 467-amino-acid chain: UDP-glycosyltransferase 71D1 (467 aa).

Catalysis depends on histidine 16, which acts as the Proton acceptor. An an anthocyanidin-binding site is contributed by histidine 16. The Charge relay role is filled by aspartate 122. The UDP-alpha-D-glucose site is built by threonine 144, glutamine 341, histidine 356, tryptophan 359, asparagine 360, serine 361, and glutamate 364. Residue alanine 379 participates in an anthocyanidin binding. Residues glutamate 380 and glutamine 381 each coordinate UDP-alpha-D-glucose.

It belongs to the UDP-glycosyltransferase family.

The catalysed reaction is a flavonol + UDP-alpha-D-glucose = a flavonol 3-O-beta-D-glucoside + UDP + H(+). Its function is as follows. Possesses quercetin 3-O-glucosyltransferase activity in vitro. The sequence is that of UDP-glycosyltransferase 71D1 (UGT71D1) from Arabidopsis thaliana (Mouse-ear cress).